Consider the following 552-residue polypeptide: Serine palmitoyltransferase 3 (552 aa).

Residues 1–29 (MANPGGGAVCNGKLHNHKKQSNGSQSRNC) form a disordered region. The chain crosses the membrane as a helical span at residues 59–79 (PLHVMVFTYMGYGIGTLFGYL). An N6-(pyridoxal phosphate)lysine modification is found at lysine 371.

Belongs to the class-II pyridoxal-phosphate-dependent aminotransferase family. Component of the serine palmitoyltransferase (SPT) complex, which is composed of SPTLC1, SPTLC2 or SPTLC3 and SPTSSA or SPTSSB. The heterodimer consisting of SPTLC1 and SPTLC2/SPTLC3 forms the catalytic core of the enzyme, while SPTSSA or SPTSSB subunits determine substrate specificity. SPT also interacts with ORMDL proteins, especially ORMDL3, which negatively regulate SPT activity in the presence of ceramides. Requires pyridoxal 5'-phosphate as cofactor. As to expression, expressed in most tissues, except peripheral blood cells and bone marrow, with highest levels in heart, kidney, liver, uterus and skin.

The protein resides in the endoplasmic reticulum membrane. The catalysed reaction is L-serine + hexadecanoyl-CoA + H(+) = 3-oxosphinganine + CO2 + CoA. The enzyme catalyses dodecanoyl-CoA + L-serine + H(+) = 3-oxotetradecasphinganine + CO2 + CoA. It catalyses the reaction tetradecanoyl-CoA + L-serine + H(+) = 3-oxohexadecasphinganine + CO2 + CoA. It carries out the reaction octadecanoyl-CoA + L-serine + H(+) = 3-oxoeicosasphinganine + CO2 + CoA. Its pathway is lipid metabolism; sphingolipid metabolism. SPT complex catalytic activity is negatively regulated by ORMDL proteins, including ORMDL3, in the presence of ceramides. This mechanism allows to maintain ceramide levels at sufficient concentrations for the production of complex sphingolipids, but which prevents the accumulation of ceramides to levels that trigger apoptosis. Component of the serine palmitoyltransferase multisubunit enzyme (SPT) that catalyzes the initial and rate-limiting step in sphingolipid biosynthesis by condensing L-serine and activated acyl-CoA (most commonly palmitoyl-CoA) to form long-chain bases. The SPT complex is composed of SPTLC1, SPTLC2 or SPTLC3 and SPTSSA or SPTSSB. Within this complex, the heterodimer consisting of SPTLC1 and SPTLC2/SPTLC3 forms the catalytic core. The composition of the serine palmitoyltransferase (SPT) complex determines the substrate preference. The SPTLC1-SPTLC2-SPTSSA complex shows a strong preference for C16-CoA substrate, while the SPTLC1-SPTLC3-SPTSSA isozyme uses both C14-CoA and C16-CoA as substrates, with a slight preference for C14-CoA. The SPTLC1-SPTLC2-SPTSSB complex shows a strong preference for C18-CoA substrate, while the SPTLC1-SPTLC3-SPTSSB isozyme displays an ability to use a broader range of acyl-CoAs, without apparent preference. The chain is Serine palmitoyltransferase 3 from Homo sapiens (Human).